Here is a 343-residue protein sequence, read N- to C-terminus: Small ribosomal subunit biogenesis GTPase RsgA (343 aa).

The region spanning Arg-116–Phe-275 is the CP-type G domain. GTP-binding positions include Asn-163 to Asp-166 and Gly-217 to Ser-225. The Zn(2+) site is built by Cys-299, Cys-304, His-306, and Cys-312.

This sequence belongs to the TRAFAC class YlqF/YawG GTPase family. RsgA subfamily. In terms of assembly, monomer. Associates with 30S ribosomal subunit, binds 16S rRNA. It depends on Zn(2+) as a cofactor.

Its subcellular location is the cytoplasm. Functionally, one of several proteins that assist in the late maturation steps of the functional core of the 30S ribosomal subunit. Helps release RbfA from mature subunits. May play a role in the assembly of ribosomal proteins into the subunit. Circularly permuted GTPase that catalyzes slow GTP hydrolysis, GTPase activity is stimulated by the 30S ribosomal subunit. The protein is Small ribosomal subunit biogenesis GTPase RsgA of Pseudomonas syringae pv. syringae (strain B728a).